Reading from the N-terminus, the 364-residue chain is Methylthioribose-1-phosphate isomerase (364 aa).

Catalysis depends on Asp254, which acts as the Proton donor.

The protein belongs to the eIF-2B alpha/beta/delta subunits family. MtnA subfamily.

The protein resides in the cytoplasm. It is found in the nucleus. The enzyme catalyses 5-(methylsulfanyl)-alpha-D-ribose 1-phosphate = 5-(methylsulfanyl)-D-ribulose 1-phosphate. It participates in amino-acid biosynthesis; L-methionine biosynthesis via salvage pathway; L-methionine from S-methyl-5-thio-alpha-D-ribose 1-phosphate: step 1/6. Catalyzes the interconversion of methylthioribose-1-phosphate (MTR-1-P) into methylthioribulose-1-phosphate (MTRu-1-P). This chain is Methylthioribose-1-phosphate isomerase, found in Drosophila sechellia (Fruit fly).